The following is a 96-amino-acid chain: MMVQVPIFDLLKLLDVLGIDSISFRVLNEYDEGFIRVDYLEEALQKDGWSKVYNESEDPNYCCGNFDVEYANNGYKIILRCDEDGYVFQITINKVT.

In terms of biological role, essential for virus function. This is an uncharacterized protein from Saccharolobus solfataricus (Sulfolobus solfataricus).